Consider the following 239-residue polypeptide: Transcriptional regulatory protein BtsR (239 aa).

The region spanning 3 to 116 (KVLIVDDEPL…RLEKTLHRLR (114 aa)) is the Response regulatory domain. Aspartate 54 bears the 4-aspartylphosphate mark. Residues 137-239 (IPCTGHSRIY…LKSLKEAIGL (103 aa)) enclose the HTH LytTR-type domain.

Post-translationally, phosphorylated by BtsS.

Functionally, member of the two-component regulatory system BtsS/BtsR. BtsR regulates expression of btsT by binding to its promoter region. The protein is Transcriptional regulatory protein BtsR of Salmonella typhimurium (strain LT2 / SGSC1412 / ATCC 700720).